The sequence spans 406 residues: Putative permease Rv2963 (406 aa).

Helical transmembrane passes span 30-50 (WEIL…QAVV), 67-87 (LVIA…AVAL), 111-131 (LVVE…TAAE), 132-152 (FVGG…FVGA), 208-228 (LAIL…AAWV), 246-266 (AVWG…CSIG), 278-298 (GISF…LPIL), 312-332 (VLLG…ELLF), and 361-381 (VIFL…GGLP).

Belongs to the UPF0718 family.

It localises to the cell membrane. This is Putative permease Rv2963 from Mycobacterium tuberculosis (strain ATCC 25618 / H37Rv).